The sequence spans 370 residues: Protein-glutamate methylesterase/protein-glutamine glutaminase 3 (370 aa).

Positions 3–119 (KVLIVDDSAL…SLNVSRIERE (117 aa)) constitute a Response regulatory domain. The residue at position 53 (aspartate 53) is a 4-aspartylphosphate. Positions 166 to 360 (SLTEIGVVLI…GQLNAWMSRT (195 aa)) constitute a CheB-type methylesterase domain. Active-site residues include serine 178, histidine 205, and aspartate 302.

The protein belongs to the CheB family. Post-translationally, phosphorylated by CheA. Phosphorylation of the N-terminal regulatory domain activates the methylesterase activity.

The protein localises to the cytoplasm. It carries out the reaction [protein]-L-glutamate 5-O-methyl ester + H2O = L-glutamyl-[protein] + methanol + H(+). The catalysed reaction is L-glutaminyl-[protein] + H2O = L-glutamyl-[protein] + NH4(+). Involved in chemotaxis. Part of a chemotaxis signal transduction system that modulates chemotaxis in response to various stimuli. Catalyzes the demethylation of specific methylglutamate residues introduced into the chemoreceptors (methyl-accepting chemotaxis proteins or MCP) by CheR. Also mediates the irreversible deamidation of specific glutamine residues to glutamic acid. The polypeptide is Protein-glutamate methylesterase/protein-glutamine glutaminase 3 (Rhodospirillum rubrum (strain ATCC 11170 / ATH 1.1.1 / DSM 467 / LMG 4362 / NCIMB 8255 / S1)).